A 545-amino-acid chain; its full sequence is ATP synthase subunit alpha (545 aa).

Residue 172 to 179 (GDRKTGKT) coordinates ATP. A disordered region spans residues 511-545 (FQTTDGTPVINEPEARPLGDDEVTKSQITVSRKTQ). Residues 523–534 (PEARPLGDDEVT) show a composition bias toward basic and acidic residues. Residues 535 to 545 (KSQITVSRKTQ) show a composition bias toward polar residues.

Belongs to the ATPase alpha/beta chains family. F-type ATPases have 2 components, CF(1) - the catalytic core - and CF(0) - the membrane proton channel. CF(1) has five subunits: alpha(3), beta(3), gamma(1), delta(1), epsilon(1). CF(0) has three main subunits: a(1), b(2) and c(9-12). The alpha and beta chains form an alternating ring which encloses part of the gamma chain. CF(1) is attached to CF(0) by a central stalk formed by the gamma and epsilon chains, while a peripheral stalk is formed by the delta and b chains.

The protein localises to the cell membrane. It catalyses the reaction ATP + H2O + 4 H(+)(in) = ADP + phosphate + 5 H(+)(out). In terms of biological role, produces ATP from ADP in the presence of a proton gradient across the membrane. The alpha chain is a regulatory subunit. The chain is ATP synthase subunit alpha from Corynebacterium jeikeium (strain K411).